Here is an 892-residue protein sequence, read N- to C-terminus: Translation initiation factor IF-2 (892 aa).

A compositionally biased stretch (basic and acidic residues) spans 138–185 (QRNLAEQQRLAEVDRQRVEEQERKRREEEQAELERQKTESRVVEEILV). Disordered regions lie at residues 138-250 (QRNL…EDDS) and 262-298 (AAERARRGSNTRGKGGGSHRSATHRGNENSIRSSGAH). Low complexity predominate over residues 207 to 219 (LPRTVRPTPAARP). A tr-type G domain is found at 391–560 (PRPPVVTIMG…SIQAEVLELK (170 aa)). Residues 400–407 (GHVDHGKT), 446–450 (DTPGH), and 500–503 (SKID) each bind GTP.

This sequence belongs to the TRAFAC class translation factor GTPase superfamily. Classic translation factor GTPase family. IF-2 subfamily.

It localises to the cytoplasm. In terms of biological role, one of the essential components for the initiation of protein synthesis. Protects formylmethionyl-tRNA from spontaneous hydrolysis and promotes its binding to the 30S ribosomal subunits. Also involved in the hydrolysis of GTP during the formation of the 70S ribosomal complex. The chain is Translation initiation factor IF-2 from Xylella fastidiosa (strain Temecula1 / ATCC 700964).